The primary structure comprises 417 residues: MYQPGILGRRKRVCKPWTVALTTTAALLALAVLIGLLVYFLVYEEKTHYYQASFWIPSIKYSSDLSEEQSKLQINLKQKINNEIDVIFQRSSLKHHYVKSQVVNFRPSNDGVKADILIKFQIPRKNADTLRSEADSILNKKLQSSQSFLKRDISLPYLREMNAAQAEHILNSNCGLGMEYPRIARIADGKPAGSNSWPWQSSLQVEGIHLCGASLIGSQWLVTSAHCFDNYKNPKLWTVSFGRTLGNPLTTRKVESIIIHENYAAHKHDDDIAVVKLSSPVLFSENLRTVCLPEATFQVLPKSKVFVTGWGALKANGPFPNSLQEVEIEIISNDVCNQVNVYGGAISSGMICAGFLTGKLDACEGDSGGPLVISDNRNKWYLLGIVSWGIDCGKENKPGIYTRVTHYRNWIKSKTNI.

At 1–22 (MYQPGILGRRKRVCKPWTVALT) the chain is on the cytoplasmic side. The helical; Signal-anchor for type II membrane protein transmembrane segment at 23–43 (TTAALLALAVLIGLLVYFLVY) threads the bilayer. Residues 44 to 417 (EEKTHYYQAS…RNWIKSKTNI (374 aa)) are Extracellular-facing. Residues 46–165 (KTHYYQASFW…PYLREMNAAQ (120 aa)) enclose the SEA domain. The region spanning 186-416 (IADGKPAGSN…YRNWIKSKTN (231 aa)) is the Peptidase S1 domain. Residues cysteine 211 and cysteine 227 are joined by a disulfide bond. Residues histidine 226 and aspartate 271 each act as charge relay system in the active site. 2 disulfide bridges follow: cysteine 336–cysteine 352 and cysteine 363–cysteine 392. The active-site Charge relay system is the serine 367.

The protein belongs to the peptidase S1 family. As to expression, highest expression in lung and tongue. Also expressed in brain, colon, heart and liver. Isoform 1 is the predominant form in tongue whereas both isoforms are expressed in similar amounts in lung. At the cellular level, expression is confined to epithelial cells within the cleft of the circumvallate papillae extending into the ducts of the minor salivary glands, the respiratory epithelium of the nasal cavity and tear gland ducts.

The protein localises to the membrane. In Rattus norvegicus (Rat), this protein is Transmembrane protease serine 11G (Tmprss11g).